The primary structure comprises 432 residues: MTEISQILAREVLDSRGNPTVEAEVQLAGGARGRAAVPSGASTGEHEAIELRDGDKHRYLGKGVQKAVKNVVDVLAPALVGMDAADQFAVDQRMLELDGTATKGKLGANAILAVSMAAARAAADAHGLPLYRYVGGVQARTLPVPLMNILNGGAHADTRVDVQEFMVVPAGASSFAEGLRWGAEVFHALKKILKGRKLATGVGDEGGYAPDLPANEEALKLIMEAIDQAGFKAGEQLFLALDVAASEFFDKGSKKYKLKGEGKEYDSTGLLEYYRGLSERYPIISIEDGMAEDDWEGWKKLTDALGSRMQLVGDDLFVTNVERLGRGIETGTANSILVKVNQIGTLTETFDAVRMAHRAGYTSVMSHRSGETEDTTIADLAVALDCGQIKTGSASRSDRVAKYNQLLRIEGELGAAARYAGKSVFRALNQKK.

Residue glutamine 163 participates in (2R)-2-phosphoglycerate binding. Glutamate 205 acts as the Proton donor in catalysis. Residues aspartate 242, glutamate 287, and aspartate 314 each coordinate Mg(2+). Lysine 339, arginine 368, serine 369, and lysine 390 together coordinate (2R)-2-phosphoglycerate. Lysine 339 functions as the Proton acceptor in the catalytic mechanism.

Belongs to the enolase family. Mg(2+) is required as a cofactor.

The protein localises to the cytoplasm. The protein resides in the secreted. It localises to the cell surface. It carries out the reaction (2R)-2-phosphoglycerate = phosphoenolpyruvate + H2O. It functions in the pathway carbohydrate degradation; glycolysis; pyruvate from D-glyceraldehyde 3-phosphate: step 4/5. Functionally, catalyzes the reversible conversion of 2-phosphoglycerate (2-PG) into phosphoenolpyruvate (PEP). It is essential for the degradation of carbohydrates via glycolysis. This is Enolase from Myxococcus xanthus (strain DK1622).